We begin with the raw amino-acid sequence, 331 residues long: Putative T-box protein 36 (331 aa).

Residues 29 to 210 (EITKKQWNQL…MNRFSRKRKY (182 aa)) constitute a DNA-binding region (T-box).

It localises to the nucleus. The polypeptide is Putative T-box protein 36 (tbx-36) (Caenorhabditis elegans).